Consider the following 98-residue polypeptide: uncharacterized protein (98 aa).

Residues L10 to V30 traverse the membrane as a helical segment.

Its subcellular location is the host membrane. This is an uncharacterized protein from Saccharolobus islandicus (Sulfolobus islandicus).